A 196-amino-acid polypeptide reads, in one-letter code: MPVESGAGNDQPKRLTVLSGPSGVGKSTVVKELRRRRPEVWLSVSVTTRPPRPGETDGVEYYFVDDAEFDRLVAENELLEWAEFAGNRYGTPREPVLKRLAAGQPVLLEIDLNGARQVRANMPDAFLVFLAPPSWEELVRRLTGRGTESPEVIQRRLETARIELAAEKEFDVTLVNTSVHEVCDELLALIAAPSTQ.

Residues 1–24 (MPVESGAGNDQPKRLTVLSGPSGV) are disordered. The Guanylate kinase-like domain occupies 13-191 (KRLTVLSGPS…VCDELLALIA (179 aa)). Residue 20-27 (GPSGVGKS) participates in ATP binding.

This sequence belongs to the guanylate kinase family.

It localises to the cytoplasm. The enzyme catalyses GMP + ATP = GDP + ADP. Functionally, essential for recycling GMP and indirectly, cGMP. The polypeptide is Guanylate kinase (Thermobifida fusca (strain YX)).